The primary structure comprises 63 residues: MANAAKTIKVTLVKSTIGILPKHKDCVRGLGLRKINHTVEVEDTAAVRGMINKVNYLVKVEGE.

The protein belongs to the universal ribosomal protein uL30 family. In terms of assembly, part of the 50S ribosomal subunit.

This chain is Large ribosomal subunit protein uL30, found in Hahella chejuensis (strain KCTC 2396).